Reading from the N-terminus, the 178-residue chain is Adenine phosphoribosyltransferase (178 aa).

This sequence belongs to the purine/pyrimidine phosphoribosyltransferase family. Homodimer.

It localises to the cytoplasm. It catalyses the reaction AMP + diphosphate = 5-phospho-alpha-D-ribose 1-diphosphate + adenine. The protein operates within purine metabolism; AMP biosynthesis via salvage pathway; AMP from adenine: step 1/1. Its function is as follows. Catalyzes a salvage reaction resulting in the formation of AMP, that is energically less costly than de novo synthesis. In Pseudoalteromonas atlantica (strain T6c / ATCC BAA-1087), this protein is Adenine phosphoribosyltransferase.